The primary structure comprises 166 residues: Phospholipase A2 inhibitor clone 02/03/06/07 (166 aa).

The N-terminal stretch at 1–19 (MRLILLSGLLLLGTFLANG) is a signal peptide. A C-type lectin domain is found at 46–161 (LKHAFLTVHK…CDDNLLVVCE (116 aa)). Cystine bridges form between Cys83–Cys160 and Cys138–Cys152. A glycan (N-linked (GlcNAc...) asparagine) is linked at Asn122.

Belongs to the alpha-type phospholipase A2 inhibitor family. Homotrimer; non-covalently linked. As to expression, expressed by the liver.

The protein resides in the secreted. Functionally, this phospholipase A2 inhibitor binds directly phospholipase A2 in the presence or absence of calcium. The polypeptide is Phospholipase A2 inhibitor clone 02/03/06/07 (Lachesis muta muta (Bushmaster)).